Reading from the N-terminus, the 329-residue chain is Phosphate acyltransferase (329 aa).

The protein belongs to the PlsX family. Homodimer. Probably interacts with PlsY.

Its subcellular location is the cytoplasm. The enzyme catalyses a fatty acyl-[ACP] + phosphate = an acyl phosphate + holo-[ACP]. It functions in the pathway lipid metabolism; phospholipid metabolism. Catalyzes the reversible formation of acyl-phosphate (acyl-PO(4)) from acyl-[acyl-carrier-protein] (acyl-ACP). This enzyme utilizes acyl-ACP as fatty acyl donor, but not acyl-CoA. This is Phosphate acyltransferase from Anoxybacillus flavithermus (strain DSM 21510 / WK1).